A 1549-amino-acid chain; its full sequence is FERM and PDZ domain-containing protein 1 (1549 aa).

In terms of domain architecture, PDZ spans 57–135; it reads TVTLDKDVLL…ALSITVVRCT (79 aa). Positions 181–496 constitute an FERM domain; sequence NVLKVYLENG…GYYRLFVDPA (316 aa). 7 disordered regions span residues 554-618, 717-738, 775-834, 913-1046, 1097-1174, 1231-1257, and 1321-1347; these read AREE…DDLD, SHLS…PPQW, YDAA…YAKS, STNP…RSEI, SLDS…EAQE, LSPC…DDSP, and PETE…AGSQ. The span at 717-730 shows a compositional bias: polar residues; the sequence is SHLSDSGSESTASR. The interval 924–931 is important for interaction with GPSM2; sequence EPETMETK. Polar residues predominate over residues 950–961; that stretch reads PSNTENPVTTDG. A compositionally biased stretch (low complexity) spans 962-980; the sequence is SSASIPHSPHHSNPGSSSP. Basic and acidic residues predominate over residues 1117-1130; the sequence is SGKDLGDSKGDRLD.

Interacts with GPSM1. Interacts with GPSM2.

Its subcellular location is the cytoplasm. It localises to the cytosol. The protein resides in the cell membrane. Functionally, stabilizes membrane-bound GPSM1, and thereby promotes its interaction with GNAI1. In Mus musculus (Mouse), this protein is FERM and PDZ domain-containing protein 1 (Frmpd1).